We begin with the raw amino-acid sequence, 662 residues long: Rap guanine nucleotide exchange factor-like 1 (662 aa).

The interval 1–149 (MKPLEKFLKK…PPWAPLGAPE (149 aa)) is disordered. A compositionally biased stretch (gly residues) spans 20 to 48 (VAGGPGGGLGSCGGPGGGGGPGGGGGPAG). Residues 49–64 (GQRSLQRRQSVSRLLL) show a composition bias toward low complexity. A compositionally biased stretch (pro residues) spans 73–82 (AEPGLEPPVP). Over residues 120 to 135 (LRSPSSYSSDELSPGE) the composition is skewed to low complexity. In terms of domain architecture, Ras-GEF spans 424-660 (EPEDVANHLT…FELSYKLEAN (237 aa)).

Probable guanine nucleotide exchange factor (GEF). The protein is Rap guanine nucleotide exchange factor-like 1 (RAPGEFL1) of Homo sapiens (Human).